We begin with the raw amino-acid sequence, 560 residues long: Membrane protein insertase YidC (560 aa).

Residues 1 to 21 form a helical membrane-spanning segment; that stretch reads MDIKRTILIAALAIVSYVMVL. Residues 42–66 are disordered; sequence VAPGLPDGVPAANNGASADVPSANA. 5 consecutive transmembrane segments (helical) span residues 341 to 361, 367 to 387, 437 to 457, 468 to 488, and 515 to 535; these read LELT…FWLL, LLGN…GLFF, LGGC…YWVL, WMLW…PIIM, and PIIF…YWVV.

The protein belongs to the OXA1/ALB3/YidC family. Type 1 subfamily. As to quaternary structure, interacts with the Sec translocase complex via SecD. Specifically interacts with transmembrane segments of nascent integral membrane proteins during membrane integration.

It is found in the cell inner membrane. Its function is as follows. Required for the insertion and/or proper folding and/or complex formation of integral membrane proteins into the membrane. Involved in integration of membrane proteins that insert both dependently and independently of the Sec translocase complex, as well as at least some lipoproteins. Aids folding of multispanning membrane proteins. The polypeptide is Membrane protein insertase YidC (Pseudomonas putida (strain W619)).